We begin with the raw amino-acid sequence, 264 residues long: Thymidylate synthase (264 aa).

Arg-21 lines the dUMP pocket. His-51 is a binding site for (6R)-5,10-methylene-5,6,7,8-tetrahydrofolate. 126-127 contacts dUMP; it reads RR. The active-site Nucleophile is the Cys-146. Residues 166–169, Asn-177, and 207–209 contribute to the dUMP site; these read RSAD and HIY. Asp-169 contributes to the (6R)-5,10-methylene-5,6,7,8-tetrahydrofolate binding site. Residue Ser-263 participates in (6R)-5,10-methylene-5,6,7,8-tetrahydrofolate binding.

Belongs to the thymidylate synthase family. Bacterial-type ThyA subfamily. As to quaternary structure, homodimer.

It is found in the cytoplasm. It catalyses the reaction dUMP + (6R)-5,10-methylene-5,6,7,8-tetrahydrofolate = 7,8-dihydrofolate + dTMP. The protein operates within pyrimidine metabolism; dTTP biosynthesis. Its function is as follows. Catalyzes the reductive methylation of 2'-deoxyuridine-5'-monophosphate (dUMP) to 2'-deoxythymidine-5'-monophosphate (dTMP) while utilizing 5,10-methylenetetrahydrofolate (mTHF) as the methyl donor and reductant in the reaction, yielding dihydrofolate (DHF) as a by-product. This enzymatic reaction provides an intracellular de novo source of dTMP, an essential precursor for DNA biosynthesis. The chain is Thymidylate synthase from Bacillus velezensis (strain DSM 23117 / BGSC 10A6 / LMG 26770 / FZB42) (Bacillus amyloliquefaciens subsp. plantarum).